The sequence spans 333 residues: tRNA U34 carboxymethyltransferase (333 aa).

Carboxy-S-adenosyl-L-methionine contacts are provided by residues Lys97, Trp111, Lys116, Gly136, 158–160 (DPS), 189–190 (IE), Met205, Tyr209, and Arg324.

Belongs to the class I-like SAM-binding methyltransferase superfamily. CmoB family. In terms of assembly, homotetramer.

It carries out the reaction carboxy-S-adenosyl-L-methionine + 5-hydroxyuridine(34) in tRNA = 5-carboxymethoxyuridine(34) in tRNA + S-adenosyl-L-homocysteine + H(+). Catalyzes carboxymethyl transfer from carboxy-S-adenosyl-L-methionine (Cx-SAM) to 5-hydroxyuridine (ho5U) to form 5-carboxymethoxyuridine (cmo5U) at position 34 in tRNAs. The polypeptide is tRNA U34 carboxymethyltransferase (Chromohalobacter salexigens (strain ATCC BAA-138 / DSM 3043 / CIP 106854 / NCIMB 13768 / 1H11)).